Reading from the N-terminus, the 432-residue chain is Testis-specific Y-encoded-like protein 1 (432 aa).

3 disordered regions span residues 1–31 (MSGR…PDPS), 54–110 (ALPP…LETA), and 116–135 (TDDS…LSRE). Lysine 160 is covalently cross-linked (Glycyl lysine isopeptide (Lys-Gly) (interchain with G-Cter in SUMO2)).

It belongs to the nucleosome assembly protein (NAP) family. Ubiquitinated by the CRL2(APPBP2) complex, which recognizes the Arg-Xaa-Xaa-Gly sequence at the C-terminus, leading to its degradation.

It is found in the nucleus. It localises to the nucleolus. The polypeptide is Testis-specific Y-encoded-like protein 1 (TSPYL1) (Bos taurus (Bovine)).